The following is a 340-amino-acid chain: uncharacterized protein (340 aa).

2 helical membrane passes run 162 to 182 (PLVPLVAGPLPVAFFIGVLAG) and 239 to 259 (FWISLYFPLTMRSLCNAIVVP).

The protein resides in the cell membrane. This is an uncharacterized protein from Mycobacterium bovis (strain ATCC BAA-935 / AF2122/97).